Reading from the N-terminus, the 743-residue chain is 1,4-alpha-glucan branching enzyme GlgB (743 aa).

Catalysis depends on aspartate 423, which acts as the Nucleophile. Catalysis depends on glutamate 476, which acts as the Proton donor.

The protein belongs to the glycosyl hydrolase 13 family. GlgB subfamily. In terms of assembly, monomer.

The enzyme catalyses Transfers a segment of a (1-&gt;4)-alpha-D-glucan chain to a primary hydroxy group in a similar glucan chain.. The protein operates within glycan biosynthesis; glycogen biosynthesis. In terms of biological role, catalyzes the formation of the alpha-1,6-glucosidic linkages in glycogen by scission of a 1,4-alpha-linked oligosaccharide from growing alpha-1,4-glucan chains and the subsequent attachment of the oligosaccharide to the alpha-1,6 position. The polypeptide is 1,4-alpha-glucan branching enzyme GlgB (Pseudomonas fluorescens (strain ATCC BAA-477 / NRRL B-23932 / Pf-5)).